Here is a 415-residue protein sequence, read N- to C-terminus: Protein-lysine N-trimethyltransferase SMYD5 (415 aa).

Positions 20–351 constitute an SET domain; it reads NCVDVRFINN…PGEEICISYL (332 aa). Residues 95 to 135 form an MYND-type zinc finger; it reads PHPELCKVRPDRHQACPQCQVMYCSSECRQAAMDQYHKILC. S-adenosyl-L-methionine is bound at residue Tyr350. Positions 388–415 are disordered; that stretch reads DMTSEDEEEVEGEGETEGEDMEDEMTDV.

It belongs to the class V-like SAM-binding methyltransferase superfamily. As to expression, expressed at high levels in the ovary and at lower levels in the fin, testis and brain.

The protein localises to the cytoplasm. The enzyme catalyses L-lysyl-[protein] + 3 S-adenosyl-L-methionine = N(6),N(6),N(6)-trimethyl-L-lysyl-[protein] + 3 S-adenosyl-L-homocysteine + 3 H(+). It carries out the reaction L-lysyl(20)-[histone H4] + 3 S-adenosyl-L-methionine = N(6),N(6),N(6)-trimethyl-L-lysyl(20)-[histone H4] + 3 S-adenosyl-L-homocysteine + 3 H(+). It catalyses the reaction L-lysyl(36)-[histone H3] + 3 S-adenosyl-L-methionine = N(6),N(6),N(6)-trimethyl-L-lysyl(36)-[histone H3] + 3 S-adenosyl-L-homocysteine + 3 H(+). Its function is as follows. Protein-lysine N-trimethyltransferase that specifically catalyzes trimethylation of 'Lys-22' of the RPL40/eL40 subunit of the 60S ribosome, thereby promoting translation elongation and protein synthesis. May also act as a histone methyltransferase in the context of histone octamers, but not on nucleosome substrates: trimethylates 'Lys-36' of histone H3 and 'Lys-20' of histone H4 to form H3K36me3 and H4K20me3, respectively. The histone methyltransferase activity, which is independent of its SET domain, is however unsure in vivo. Plays a crucial role in hematopoiesis during embryogenesis by negatively regulating expression of genes related to both primitive and definitive hematopoiesis. This is Protein-lysine N-trimethyltransferase SMYD5 from Danio rerio (Zebrafish).